The sequence spans 385 residues: 1-deoxy-D-xylulose 5-phosphate reductoisomerase (385 aa).

Residues Thr11, Gly12, Ser13, Ile14, Ala37, Arg38, Asn39, and Asn123 each coordinate NADPH. A 1-deoxy-D-xylulose 5-phosphate-binding site is contributed by Lys124. Glu125 contributes to the NADPH binding site. Asp149 contributes to the Mn(2+) binding site. Positions 150, 151, 173, and 196 each coordinate 1-deoxy-D-xylulose 5-phosphate. Residue Glu151 participates in Mn(2+) binding. Gly202 serves as a coordination point for NADPH. 4 residues coordinate 1-deoxy-D-xylulose 5-phosphate: Ser209, Asn214, Lys215, and Glu218. Glu218 is a binding site for Mn(2+).

It belongs to the DXR family. Requires Mg(2+) as cofactor. Mn(2+) is required as a cofactor.

The enzyme catalyses 2-C-methyl-D-erythritol 4-phosphate + NADP(+) = 1-deoxy-D-xylulose 5-phosphate + NADPH + H(+). The protein operates within isoprenoid biosynthesis; isopentenyl diphosphate biosynthesis via DXP pathway; isopentenyl diphosphate from 1-deoxy-D-xylulose 5-phosphate: step 1/6. Functionally, catalyzes the NADPH-dependent rearrangement and reduction of 1-deoxy-D-xylulose-5-phosphate (DXP) to 2-C-methyl-D-erythritol 4-phosphate (MEP). This is 1-deoxy-D-xylulose 5-phosphate reductoisomerase from Moorella thermoacetica (strain ATCC 39073 / JCM 9320).